The chain runs to 108 residues: Pyrimidine/purine nucleoside phosphorylase (108 aa).

Belongs to the nucleoside phosphorylase PpnP family.

It carries out the reaction a purine D-ribonucleoside + phosphate = a purine nucleobase + alpha-D-ribose 1-phosphate. The enzyme catalyses adenosine + phosphate = alpha-D-ribose 1-phosphate + adenine. It catalyses the reaction cytidine + phosphate = cytosine + alpha-D-ribose 1-phosphate. The catalysed reaction is guanosine + phosphate = alpha-D-ribose 1-phosphate + guanine. It carries out the reaction inosine + phosphate = alpha-D-ribose 1-phosphate + hypoxanthine. The enzyme catalyses thymidine + phosphate = 2-deoxy-alpha-D-ribose 1-phosphate + thymine. It catalyses the reaction uridine + phosphate = alpha-D-ribose 1-phosphate + uracil. The catalysed reaction is xanthosine + phosphate = alpha-D-ribose 1-phosphate + xanthine. Functionally, catalyzes the phosphorolysis of diverse nucleosides, yielding D-ribose 1-phosphate and the respective free bases. Can use uridine, adenosine, guanosine, cytidine, thymidine, inosine and xanthosine as substrates. Also catalyzes the reverse reactions. The chain is Pyrimidine/purine nucleoside phosphorylase from Acinetobacter baylyi (strain ATCC 33305 / BD413 / ADP1).